Here is a 692-residue protein sequence, read N- to C-terminus: NADH-ubiquinone oxidoreductase chain 5 (692 aa).

A run of 17 helical transmembrane segments spans residues 5 to 23 (IIIL…GRKV), 30 to 52 (ILGC…EVGF), 81 to 103 (LTVS…SIGY), 112 to 129 (RFFS…ILVT), 133 to 155 (YLLM…SFWF), 168 to 190 (FLTN…WSLG), 200 to 222 (LAPY…GAMA), 243 to 262 (VSAL…LLIR), 272 to 294 (TVLL…IGLF), 301 to 319 (IIAY…AIGL), 329 to 351 (LINH…HAVV), 364 to 386 (SFLP…FPFM), 409 to 431 (NVYF…VIYL), 452 to 471 (IFLS…FGYL), 511 to 528 (LLPF…IVYY), 535 to 557 (VVDF…RFLV), and 615 to 637 (YALY…SIFF).

The protein belongs to the complex I subunit 5 family.

It is found in the mitochondrion inner membrane. It catalyses the reaction a ubiquinone + NADH + 5 H(+)(in) = a ubiquinol + NAD(+) + 4 H(+)(out). In terms of biological role, core subunit of the mitochondrial membrane respiratory chain NADH dehydrogenase (Complex I) that is believed to belong to the minimal assembly required for catalysis. Complex I functions in the transfer of electrons from NADH to the respiratory chain. The immediate electron acceptor for the enzyme is believed to be ubiquinone. The protein is NADH-ubiquinone oxidoreductase chain 5 (nd5) of Hypocrea jecorina (Trichoderma reesei).